A 480-amino-acid chain; its full sequence is Glutamate--tRNA ligase (480 aa).

A 'HIGH' region motif is present at residues 21–31 (PSPTGYLHVGG). Residues 122–146 (NTQEQNKQKPRYDRHCLGDHKHSPE) are compositionally biased toward basic and acidic residues. The tract at residues 122–149 (NTQEQNKQKPRYDRHCLGDHKHSPEQPH) is disordered. The 'KMSKS' region motif lies at 248–252 (KLSKR). Position 251 (K251) interacts with ATP.

Belongs to the class-I aminoacyl-tRNA synthetase family. Glutamate--tRNA ligase type 1 subfamily. In terms of assembly, monomer.

The protein resides in the cytoplasm. It catalyses the reaction tRNA(Glu) + L-glutamate + ATP = L-glutamyl-tRNA(Glu) + AMP + diphosphate. Catalyzes the attachment of glutamate to tRNA(Glu) in a two-step reaction: glutamate is first activated by ATP to form Glu-AMP and then transferred to the acceptor end of tRNA(Glu). This chain is Glutamate--tRNA ligase, found in Pasteurella multocida (strain Pm70).